Here is a 441-residue protein sequence, read N- to C-terminus: Actin-related protein 4 (441 aa).

The segment at 48-73 is disordered; the sequence is VDVDSTKTNSNSEDSKTESEKEKSKR. Basic and acidic residues predominate over residues 60–70; the sequence is EDSKTESEKEK.

Belongs to the actin family. ARP4 subfamily. In terms of assembly, component of the SWR1 chromatin-remodeling complex and of the NuA4 histone acetyltransferase complex. Interacts with the SWI/SNF complex. Interacts with EAF1A and EAF1B. In terms of tissue distribution, mostly expressed in flowers, and, to a lower extent, in roots, seedlings, leaves and siliques (at protein level).

The protein resides in the nucleus. It is found in the cytoplasm. Involved in several developmental processes including organization of plant organs, flowering time, anther development, flower senescence and fertility, probably by regulating the chromatin structure. The protein is Actin-related protein 4 of Arabidopsis thaliana (Mouse-ear cress).